Here is a 222-residue protein sequence, read N- to C-terminus: Putative N-acetylmannosamine-6-phosphate 2-epimerase (222 aa).

It belongs to the NanE family.

It catalyses the reaction an N-acyl-D-glucosamine 6-phosphate = an N-acyl-D-mannosamine 6-phosphate. Its pathway is amino-sugar metabolism; N-acetylneuraminate degradation; D-fructose 6-phosphate from N-acetylneuraminate: step 3/5. In terms of biological role, converts N-acetylmannosamine-6-phosphate (ManNAc-6-P) to N-acetylglucosamine-6-phosphate (GlcNAc-6-P). The sequence is that of Putative N-acetylmannosamine-6-phosphate 2-epimerase from Staphylococcus aureus (strain USA300).